The sequence spans 67 residues: Large ribosomal subunit protein bL35 (67 aa).

It belongs to the bacterial ribosomal protein bL35 family.

The chain is Large ribosomal subunit protein bL35 from Methylorubrum extorquens (strain CM4 / NCIMB 13688) (Methylobacterium extorquens).